Here is an 88-residue protein sequence, read N- to C-terminus: MTRTVHCRKYNKEMEGLAVPPLPGAKGTELFNSVSKQAWQEWLQHQTMLINEKQLNLMDLTARAYLTEQMEKFLSGADYDQADGYVPK.

This sequence belongs to the Fe(2+)-trafficking protein family.

Its function is as follows. Could be a mediator in iron transactions between iron acquisition and iron-requiring processes, such as synthesis and/or repair of Fe-S clusters in biosynthetic enzymes. This Teredinibacter turnerae (strain ATCC 39867 / T7901) protein is Probable Fe(2+)-trafficking protein.